The following is a 433-amino-acid chain: Serine hydroxymethyltransferase (433 aa).

(6S)-5,6,7,8-tetrahydrofolate-binding positions include L127 and 131 to 133; that span reads GHL. K236 is subject to N6-(pyridoxal phosphate)lysine.

It belongs to the SHMT family. As to quaternary structure, homodimer. Pyridoxal 5'-phosphate serves as cofactor.

It is found in the cytoplasm. The enzyme catalyses (6R)-5,10-methylene-5,6,7,8-tetrahydrofolate + glycine + H2O = (6S)-5,6,7,8-tetrahydrofolate + L-serine. The protein operates within one-carbon metabolism; tetrahydrofolate interconversion. It participates in amino-acid biosynthesis; glycine biosynthesis; glycine from L-serine: step 1/1. Its function is as follows. Catalyzes the reversible interconversion of serine and glycine with tetrahydrofolate (THF) serving as the one-carbon carrier. This reaction serves as the major source of one-carbon groups required for the biosynthesis of purines, thymidylate, methionine, and other important biomolecules. Also exhibits THF-independent aldolase activity toward beta-hydroxyamino acids, producing glycine and aldehydes, via a retro-aldol mechanism. The polypeptide is Serine hydroxymethyltransferase (Corynebacterium urealyticum (strain ATCC 43042 / DSM 7109)).